The following is a 483-amino-acid chain: Probable cobyric acid synthase (483 aa).

One can recognise a GATase cobBQ-type domain in the interval 247–433 (ELHIQIIKLP…LHGIFHNFAF (187 aa)). Cysteine 325 (nucleophile) is an active-site residue. Histidine 425 is a catalytic residue.

It belongs to the CobB/CobQ family. CobQ subfamily.

It participates in cofactor biosynthesis; adenosylcobalamin biosynthesis. Its function is as follows. Catalyzes amidations at positions B, D, E, and G on adenosylcobyrinic A,C-diamide. NH(2) groups are provided by glutamine, and one molecule of ATP is hydrogenolyzed for each amidation. The protein is Probable cobyric acid synthase of Thermococcus gammatolerans (strain DSM 15229 / JCM 11827 / EJ3).